Here is a 199-residue protein sequence, read N- to C-terminus: Cytosine-containing mismatch-binding protein 1 (199 aa).

Positions 123–197 form a DNA-binding region, HMG box; the sequence is PKKPSSAFIL…QYDKFMKEAG (75 aa).

Monomer.

It localises to the nucleus. Its function is as follows. Binds to cytosines in base mismatches and opposite chemically altered guanines. May be involved in repair of DNA damage. In Schizosaccharomyces pombe (strain 972 / ATCC 24843) (Fission yeast), this protein is Cytosine-containing mismatch-binding protein 1.